We begin with the raw amino-acid sequence, 931 residues long: Netrin receptor UNC5C (931 aa).

The first 40 residues, methionine 1 to alanine 40, serve as a signal peptide directing secretion. The Extracellular segment spans residues glutamine 41–tyrosine 380. The region spanning proline 62–tyrosine 159 is the Ig-like domain. 9 disulfides stabilise this stretch: cysteine 83–cysteine 144, cysteine 95–cysteine 142, cysteine 188–cysteine 239, cysteine 272–cysteine 309, cysteine 276–cysteine 313, cysteine 287–cysteine 299, cysteine 328–cysteine 362, cysteine 332–cysteine 367, and cysteine 340–cysteine 352. The Ig-like C2-type domain occupies arginine 161 to isoleucine 256. Residue asparagine 236 is glycosylated (N-linked (GlcNAc...) asparagine). 2 consecutive TSP type-1 domains span residues asparagine 260–proline 314 and aspartate 316–methionine 368. Asparagine 361 carries N-linked (GlcNAc...) asparagine glycosylation. A helical transmembrane segment spans residues valine 381–valine 401. The Cytoplasmic segment spans residues tyrosine 402 to tyrosine 931. A required for netrin-mediated axon repulsion of neuronal growth cones region spans residues tyrosine 402–tyrosine 931. Residue serine 502 is modified to Phosphoserine. One can recognise a ZU5 domain in the interval cysteine 530–serine 673. Phosphotyrosine is present on tyrosine 568. The interaction with DCC stretch occupies residues serine 694–lysine 712. The Death domain maps to glutamine 850–glycine 929.

The protein belongs to the unc-5 family. As to quaternary structure, interacts with DCC (via cytoplasmic domain). Interacts (tyrosine phosphorylated form) with PTPN11. Interacts (via extracellular domain) with FLRT3 (via extracellular domain). Interacts (via Ig-like C2-type domain) with DSCAM (via extracellular domain). Interacts (via death domain) with DAPK1. Interacts (via cytoplasmic domain) with TUBB3; this interaction is decreased by NTN1/Netrin-1. Proteolytically cleaved by caspases during apoptosis. The cleavage does not take place when the receptor is associated with netrin ligand. Its cleavage by caspases is required to induce apoptosis. Post-translationally, phosphorylated on different cytoplasmic tyrosine residues. Phosphorylation of Tyr-568 leads to an interaction with PTPN11 phosphatase, suggesting that its activity is regulated by phosphorylation/dephosphorylation. Tyrosine phosphorylation is netrin-dependent. As to expression, mainly expressed in brain. Expressed in temporal lobe cortical neurons and in neurons of the hippocampal pyramidal layer. Also expressed in kidney. Not expressed in developing or adult lung.

The protein localises to the cell membrane. It is found in the cell surface. The protein resides in the synapse. It localises to the synaptosome. Its subcellular location is the cell projection. The protein localises to the axon. It is found in the dendrite. The protein resides in the growth cone. It localises to the lamellipodium. Its subcellular location is the filopodium. Its function is as follows. Receptor for netrin required for axon guidance. Mediates axon repulsion of neuronal growth cones in the developing nervous system upon ligand binding. NTN1/Netrin-1 binding might cause dissociation of UNC5C from polymerized TUBB3 in microtubules and thereby lead to increased microtubule dynamics and axon repulsion. Axon repulsion in growth cones may also be caused by its association with DCC that may trigger signaling for repulsion. Might also collaborate with DSCAM in NTN1-mediated axon repulsion independently of DCC. Also involved in corticospinal tract axon guidance independently of DCC. Involved in dorsal root ganglion axon projection towards the spinal cord. It also acts as a dependence receptor required for apoptosis induction when not associated with netrin ligand. In Homo sapiens (Human), this protein is Netrin receptor UNC5C (UNC5C).